We begin with the raw amino-acid sequence, 103 residues long: Small ribosomal subunit protein uS17 (103 aa).

The disordered stretch occupies residues 78–103 (SHSPKADKSAGSTAPAPEAAAKEVSE).

This sequence belongs to the universal ribosomal protein uS17 family. In terms of assembly, part of the 30S ribosomal subunit.

In terms of biological role, one of the primary rRNA binding proteins, it binds specifically to the 5'-end of 16S ribosomal RNA. This is Small ribosomal subunit protein uS17 from Parasynechococcus marenigrum (strain WH8102).